Consider the following 755-residue polypeptide: Probable ubiquitin carboxyl-terminal hydrolase creB (755 aa).

Positions 1-32 (MGSFLRSLRRDVGPPTPSVGATPAKKEPPVPP) are disordered. In terms of domain architecture, USP spans 55-468 (FGMENYGNTC…CAYVLFYQET (414 aa)). The Nucleophile role is filled by cysteine 64. Disordered stretches follow at residues 119–146 (EKQK…DSPE) and 237–270 (EASK…TPNT). A compositionally biased stretch (basic and acidic residues) spans 237 to 246 (EASKQPEPER). The segment covering 254–270 (ADSTELSGSSGSKTPNT) has biased composition (polar residues). Histidine 419 serves as the catalytic Proton acceptor. The disordered stretch occupies residues 495–755 (TLKQNGYPLS…LKKKSFSILS (261 aa)). Low complexity predominate over residues 547–560 (ESSPADPSTTASAT). Positions 577–648 (KKSDSHFKKE…RRHSPDDTKK (72 aa)) are enriched in basic and acidic residues. A coiled-coil region spans residues 581-630 (SHFKKERAKEEKERKANEKEKEKQRRRDQEARIREQRREDAEIRAALEAS). A compositionally biased stretch (basic residues) spans 654 to 666 (SRLKRGSKSFSHR). Positions 693–709 (NGASESQQQLPNGQSPG) are enriched in polar residues. The segment covering 718 to 733 (TGLDEERDTLKDPKHD) has biased composition (basic and acidic residues). Basic residues predominate over residues 734–755 (RSGHHGKWRSFSLKKKSFSILS).

Belongs to the peptidase C19 family. In terms of assembly, interacts with creA, creC and qutD.

It carries out the reaction Thiol-dependent hydrolysis of ester, thioester, amide, peptide and isopeptide bonds formed by the C-terminal Gly of ubiquitin (a 76-residue protein attached to proteins as an intracellular targeting signal).. Functionally, ubiquitin thioesterase component of the regulatory network controlling carbon source utilization through ubiquitination and deubiquitination involving creA, creB, creC, creD and acrB. Deubiquitinates the creA catabolic repressor and the quinate permease qutD. Also plays a role in response to carbon starvation and the control of extracellular proteases activity. This Aspergillus flavus (strain ATCC 200026 / FGSC A1120 / IAM 13836 / NRRL 3357 / JCM 12722 / SRRC 167) protein is Probable ubiquitin carboxyl-terminal hydrolase creB (creB).